The chain runs to 217 residues: MEAIAKYDFKATADDELSFKRGDILKVLNEECDQNWYKAELNGKDGFIPKNYIEMKPHPWFFGKIPRAKAEEMLSKQRHDGAFLIRESESAPGDFSLSVKFGNDVQHFKVLRDGAGKYFLWVVKFNSLNELVDYHRSTSVSRNQQIFLRDIEQMPQQPTYVQALFDFDPQEDGELGFRRGDFIHVMDNSDPNWWKGACHGQTGMFPRNYVTPVNRNV.

N-acetylmethionine is present on Met-1. The SH3 1 domain occupies 1–58; that stretch reads MEAIAKYDFKATADDELSFKRGDILKVLNEECDQNWYKAELNGKDGFIPKNYIEMKPH. 3 positions are modified to N6-acetyllysine: Lys-6, Lys-50, and Lys-109. One can recognise an SH2 domain in the interval 60-152; that stretch reads WFFGKIPRAK…NQQIFLRDIE (93 aa). Lys-109 is covalently cross-linked (Glycyl lysine isopeptide (Lys-Gly) (interchain with G-Cter in ubiquitin)). The 60-residue stretch at 156–215 folds into the SH3 2 domain; the sequence is QQPTYVQALFDFDPQEDGELGFRRGDFIHVMDNSDPNWWKGACHGQTGMFPRNYVTPVNR. A Phosphotyrosine modification is found at Tyr-209. Phosphothreonine is present on Thr-211.

The protein belongs to the GRB2/sem-5/DRK family. As to quaternary structure, associates (via SH2 domain) with activated EGF and PDGF receptors (tyrosine phosphorylated). Interacts with PDGFRA (tyrosine phosphorylated); the interaction may be indirect. Interacts with IRS4 (when Tyr-phosphorylated). Also associates to other cellular Tyr-phosphorylated proteins such as SIT1, IRS1, IRS2, SHC and LNK; probably via the concerted action of both its SH2 and SH3 domains. It also seems to interact with RAS in the signaling pathway leading to DNA synthesis. Interacts with SOS1. Forms a complex with MUC1 and SOS1, through interaction of the SH3 domains with SOS1 and the SH2 domain with phosphorylated MUC1. Interacts with phosphorylated MET. Interacts with phosphorylated TOM1L1. Interacts with the phosphorylated C-terminus of SH2B2. Interacts with phosphorylated SIT1, LAX1, LAT, LAT2 and LIME1 upon TCR and/or BCR activation. Interacts with NISCH, PTPNS1 and REPS2. Interacts with syntrophin SNTA1. Interacts (via SH3 domains) with REPS1. Interacts (via SH3 domains) with PIK3C2B. Interacts with CBL and CBLB. Interacts with AJUBA and CLNK. Interacts (via SH2 domain) with TEK/TIE2 (tyrosine phosphorylated). Interacts with SHB, INPP5D/SHIP1, SKAP1 and SKAP2. Interacts with PTPN11. Interacts with PRNP. Interacts with RALGPS1. Also interacts with HCST. Interacts with KDR. Interacts with FLT1 (tyrosine-phosphorylated). Interacts with GAPT and PTPRE. Interacts (via SH2 domain) with KIF26A. Interacts (via SH3 2) with GAB2. Interacts with ADAM15. Interacts with THEMIS2. Interacts (via SH2 domain) with AXL (phosphorylated). Interacts (via SH2 domain) with KIT (phosphorylated). Interacts with PTPRJ and BCR. Interacts with PTPN23. Interacts with FLT4 (tyrosine phosphorylated). Interacts with EPHB1 and SHC1; activates the MAPK/ERK cascade to regulate cell migration. Part of a complex including TNK2, GRB2 and one receptor tyrosine kinase (RTK) such as AXL and PDGFRL, in which GRB2 promotes RTK recruitment by TNK2. Interacts (via SH2 domain) with CSF1R (tyrosine phosphorylated). Interacts with ERBB4. Interacts with NTRK1 (phosphorylated upon ligand-binding). Interacts with PTK2/FAK1 (tyrosine phosphorylated). Interacts with PTK2B/PYK2 (tyrosine phosphorylated). Interacts (via SH2-domain) with SCIMP; this interaction is dependent on phosphorylation of SCIMP 'Tyr-58'. Interacts (via SH3 domains) with GAREM1 (via proline-rich domain and tyrosine phosphorylated); the interaction occurs upon EGF stimulation. Interacts with DAB2. Interacts with TESPA1. Interacts with THEMIS. Interacts with PLCG1, LAT and THEMIS upon TCR activation in thymocytes; the association is weaker in the absence of TESPA1. Interacts with CD28. Interacts with RAB13; may recruit RAB13 to the leading edge of migrating endothelial cells where it can activate RHOA. Interacts with ASAP3 (phosphorylated form). Interacts (via SH2 domain) with PTPRH (phosphorylated form). Interacts with PTPRO (phosphorylated form). Interacts with PTPRB (phosphorylated form). Interacts (via SH3 domain 2) with PRR14 (via proline-rich region). Interacts with DENND2B. Interacts with SPRY2. Interacts with LRRC8A. Interacts with PEAK1. Interacts with FCRL1. Interacts with PCNA. Interacts with CD19. Interacts with BECN1. Interacts with RAD51; the interaction inhibits RAD51 ATPase to stabilize RAD51-DNA complex at stalled replication forks. Interacts with MRE11; this interaction recruits MRE11 to the DNA damage sites. Interacts with RIPK1 ans SQSTM1; these interactions play a critical role in regulating programmed necrosis. Interacts with AGO2; this interaction is important for the formation of a ternary complex containing GRB2, AGO2 and DICER1. Interacts with TIGIT; this interaction inhibits PI3K and MAPK signaling cascades. Interacts with CD226; this interaction leads to activation of VAV1, PI3K and PLCG1. Interacts with SOS1; this interaction competes with GRB2 to bind SOS1 via its N-terminal SH3 domain. Phosphorylation of Tyr-209 in the C-terminal SH3 domain reduces its binding to SOS1. In terms of processing, ubiquitinated by RNF173, leading to proteasomal degradation and inhibition of the RAF/MEK/ERK pathway. In the nucleus, polyubiquitinated by RBBP6 at Lys-109 at DNA damage sites. As to expression, expressed in macrophages.

It localises to the nucleus. The protein localises to the cytoplasm. The protein resides in the endosome. Its subcellular location is the golgi apparatus. Non-enzymatic adapter protein that plays a pivotal role in precisely regulated signaling cascades from cell surface receptors to cellular responses, including signaling transduction and gene expression. Thus, participates in many biological processes including regulation of innate and adaptive immunity, autophagy, DNA repair or necroptosis. Controls signaling complexes at the T-cell antigen receptor to facilitate the activation, differentiation, and function of T-cells. Mechanistically, engagement of the TCR leads to phosphorylation of the adapter protein LAT, which serves as docking site for GRB2. In turn, GRB2 establishes a a connection with SOS1 that acts as a guanine nucleotide exchange factor and serves as a critical regulator of KRAS/RAF1 leading to MAPKs translocation to the nucleus and activation. Also functions a role in B-cell activation by amplifying Ca(2+) mobilization and activation of the ERK MAP kinase pathway upon recruitment to the phosphorylated B-cell antigen receptor (BCR). Plays a role in switching between autophagy and programmed necrosis upstream of EGFR by interacting with components of necrosomes including RIPK1 and with autophagy regulators SQSTM1 and BECN1. Regulates miRNA biogenesis by forming a functional ternary complex with AGO2 and DICER1. Functions in the replication stress response by protecting DNA at stalled replication forks from MRE11-mediated degradation. Mechanistically, inhibits RAD51 ATPase activity to stabilize RAD51 on stalled replication forks. Additionally, directly recruits and later releases MRE11 at DNA damage sites during the homology-directed repair (HDR) process. In terms of biological role, does not bind to phosphorylated epidermal growth factor receptor (EGFR) but inhibits EGF-induced transactivation of a RAS-responsive element. Acts as a dominant negative protein over GRB2 and by suppressing proliferative signals, may trigger active programmed cell death. Mechanistically, inhibits RAS-ERK signaling and downstream cell proliferation by competing with GRB2 for SOS1 binding and thus by regulating SOS1 membrane recruitment. The protein is Growth factor receptor-bound protein 2 (Grb2) of Mus musculus (Mouse).